Consider the following 271-residue polypeptide: MTLAAQPHVLAVEVDIGTHETAKFLGLTWHWDTILTSVIAGVIVVGLGLYMRWTARSGVPSKMQLLFEMLVSWVNRQVEESMGLRVAPFVAPMAVTLFVYILLCNWIGVLPSGHPEHLPAPTADINLTLTLALVVIVPMHIVSLKRRGLGRYIRHYFEPYKIFFPINVVEELAKPITLALRLFGNIFSGAIMVSLLALMPPYVLWLPQWLWKLIDLGVGVIQAFIFALLTILYYAFATATGGHGASDEHADGGDSSSRQASPTPLPAGQVR.

Transmembrane regions (helical) follow at residues 31 to 51 (WDTI…GLYM), 89 to 109 (FVAP…WIGV), 124 to 144 (DINL…IVSL), 186 to 206 (IFSG…VLWL), and 216 to 236 (LGVG…YYAF). Residues 247–271 (DEHADGGDSSSRQASPTPLPAGQVR) are disordered.

Belongs to the ATPase A chain family. In terms of assembly, F-type ATPases have 2 components, CF(1) - the catalytic core - and CF(0) - the membrane proton channel. CF(1) has five subunits: alpha(3), beta(3), gamma(1), delta(1), epsilon(1). CF(0) has three main subunits: a(1), b(2) and c(9-12). The alpha and beta chains form an alternating ring which encloses part of the gamma chain. CF(1) is attached to CF(0) by a central stalk formed by the gamma and epsilon chains, while a peripheral stalk is formed by the delta and b chains.

The protein resides in the cell membrane. Its function is as follows. Key component of the proton channel; it plays a direct role in the translocation of protons across the membrane. This Acidothermus cellulolyticus (strain ATCC 43068 / DSM 8971 / 11B) protein is ATP synthase subunit a.